Here is a 481-residue protein sequence, read N- to C-terminus: PRAME family member 22 (481 aa).

The LRR 1; degenerate repeat unit spans residues 99–126; that stretch reads RWKLQVLELRDVDENFWTIWSGARPLSC. The stretch at 181-205 is one LRR 2; degenerate repeat; it reads HLCCTKVVNYSMSILNFRNILETVY. An LRR 3; degenerate repeat occupies 206-232; that stretch reads PDSIQVLEIWNMCWPCMIVEFSRYLSQ. The stretch at 233 to 267 is one LRR 4; degenerate repeat; sequence MRNLRKLFISDGCRYLLSSDSQEQLVAEFSSVLLR. LRR repeat units follow at residues 268–293, 294–325, 326–344, 350–377, and 378–402; these read LEYL…IRCL, RSPL…SQLK, QLNL…PLRA, AATL…ALSC, and CSNL…LLRH.

This sequence belongs to the PRAME family.

The polypeptide is PRAME family member 22 (Homo sapiens (Human)).